Here is a 382-residue protein sequence, read N- to C-terminus: Nitric oxide reductase FlRd-NAD(+) reductase (382 aa).

It belongs to the FAD-dependent oxidoreductase family. FAD is required as a cofactor.

The protein resides in the cytoplasm. The enzyme catalyses 2 reduced [nitric oxide reductase rubredoxin domain] + NAD(+) + H(+) = 2 oxidized [nitric oxide reductase rubredoxin domain] + NADH. It functions in the pathway nitrogen metabolism; nitric oxide reduction. Functionally, one of at least two accessory proteins for anaerobic nitric oxide (NO) reductase. Reduces the rubredoxin moiety of NO reductase. The chain is Nitric oxide reductase FlRd-NAD(+) reductase from Vibrio vulnificus (strain CMCP6).